The chain runs to 566 residues: Glucose starvation modulator protein 1 (566 aa).

Residues 20-48 (CVFCHQKHLQCSNERPCKNCVKRNIAHGC) constitute a DNA-binding region (zn(2)-C6 fungal-type). 2 disordered regions span residues 63–92 (GVPG…SPMD) and 250–270 (KQAS…NTLS). Low complexity predominate over residues 253–270 (SPSPSNTSTSENNTNTLS).

This sequence belongs to the ERT1/acuK family.

It localises to the nucleus. Functionally, transcription factor which regulates nonfermentable carbon utilization. The protein is Glucose starvation modulator protein 1 (GSM1) of Candida albicans (strain WO-1) (Yeast).